The primary structure comprises 185 residues: 3-hydroxyanthranilate 3,4-dioxygenase (185 aa).

Position 44 (arginine 44) interacts with O2. Fe cation is bound by residues histidine 48, glutamate 54, and histidine 95. Residue glutamate 54 coordinates substrate. The substrate site is built by arginine 99 and glutamate 109. Positions 124, 127, 161, and 164 each coordinate a divalent metal cation.

Belongs to the 3-HAO family. Fe(2+) serves as cofactor.

It localises to the cytoplasm. It carries out the reaction 3-hydroxyanthranilate + O2 = (2Z,4Z)-2-amino-3-carboxymuconate 6-semialdehyde. Its pathway is cofactor biosynthesis; NAD(+) biosynthesis; quinolinate from L-kynurenine: step 3/3. Functionally, catalyzes the oxidative ring opening of 3-hydroxyanthranilate to 2-amino-3-carboxymuconate semialdehyde, which spontaneously cyclizes to quinolinate. This Podospora anserina (strain S / ATCC MYA-4624 / DSM 980 / FGSC 10383) (Pleurage anserina) protein is 3-hydroxyanthranilate 3,4-dioxygenase.